Here is a 1134-residue protein sequence, read N- to C-terminus: Mediator of RNA polymerase II transcription subunit 12 (1134 aa).

It belongs to the Mediator complex subunit 12 family. Component of the srb8-11 complex which consists of rb8, srb9(TRAP240), srb10 and srb11. The srb8-11 complex associates with the Mediator complex thereby blocking association with RNA polymerase II and leading to reduced transcriptional activation by Mediator.

The protein resides in the nucleus. Component of the srb8-11 complex. The srb8-11 complex is a regulatory module of the Mediator complex which is itself involved in regulation of basal and activated RNA polymerase II-dependent transcription. The srb8-11 complex may be involved in the transcriptional repression of a subset of genes regulated by Mediator. It may inhibit the association of the Mediator complex with RNA polymerase II to form the holoenzyme complex. This is Mediator of RNA polymerase II transcription subunit 12 (srb8) from Schizosaccharomyces pombe (strain 972 / ATCC 24843) (Fission yeast).